The following is a 396-amino-acid chain: Phospholipase A1-II 4 (396 aa).

Residue Ser221 is the Acyl-ester intermediate of the active site. Active-site charge relay system residues include Ser221, Asp282, and His319.

Belongs to the AB hydrolase superfamily. Lipase family.

It localises to the cytoplasm. Functionally, acylhydrolase that catalyzes the hydrolysis of phospholipids at the sn-1 position. The protein is Phospholipase A1-II 4 of Oryza sativa subsp. japonica (Rice).